The sequence spans 38 residues: Mu-hexatoxin-Mg1b (38 aa).

Intrachain disulfides connect C1-C15, C8-C20, and C14-C34. A Serine amide modification is found at S38.

This sequence belongs to the neurotoxin 14 (magi-1) family. 09 (magi-1) subfamily. As to expression, expressed by the venom gland.

The protein resides in the secreted. Its function is as follows. Insecticidal neurotoxin. Shows competition for site 3 of insect voltage-gated sodium channels (Nav). The polypeptide is Mu-hexatoxin-Mg1b (Macrothele gigas (Japanese funnel web spider)).